The sequence spans 285 residues: GTP-binding protein 8 (285 aa).

An EngB-type G domain is found at 110 to 283 (RQPEVCFIGR…KCFIADITGS (174 aa)). GTP-binding positions include 118 to 125 (GRSNVGKS), 147 to 151 (GHTKK), 165 to 168 (DMPG), 227 to 230 (TKID), and 262 to 264 (ISA). Mg(2+) is bound by residues serine 125 and threonine 149.

Belongs to the TRAFAC class TrmE-Era-EngA-EngB-Septin-like GTPase superfamily. EngB GTPase family. It depends on Mg(2+) as a cofactor.

The chain is GTP-binding protein 8 (Gtpbp8) from Rattus norvegicus (Rat).